Here is a 139-residue protein sequence, read N- to C-terminus: Ribulose bisphosphate carboxylase small subunit (139 aa).

Belongs to the RuBisCO small chain family. In terms of assembly, heterohexadecamer of 8 large and 8 small subunits.

Its subcellular location is the plastid. It localises to the chloroplast. Functionally, ruBisCO catalyzes two reactions: the carboxylation of D-ribulose 1,5-bisphosphate, the primary event in carbon dioxide fixation, as well as the oxidative fragmentation of the pentose substrate in the photorespiration process. Both reactions occur simultaneously and in competition at the same active site. Although the small subunit is not catalytic it is essential for maximal activity. This Chrysotila carterae (Marine alga) protein is Ribulose bisphosphate carboxylase small subunit.